A 443-amino-acid chain; its full sequence is Transcriptional adapter 2-alpha (443 aa).

Serine 6 carries the phosphoserine modification. The ZZ-type zinc finger occupies 12–69 (SDKPPCRGCSSYLMEPYIKCAECGPPPFFLCLQCFTRGFEYKKHQSDHTYEIMTSDFP). Zn(2+) is bound by residues cysteine 17, cysteine 20, cysteine 31, cysteine 34, cysteine 42, cysteine 45, histidine 55, and histidine 59. Positions 70-122 (VLDPSWTAQEEMALLEAVMDCGFGNWQDVANQMCTKTKEECEKHYMKHFINNP) constitute an SANT domain. Residues lysine 132 and lysine 138 each participate in a glycyl lysine isopeptide (Lys-Gly) (interchain with G-Cter in SUMO2) cross-link. One can recognise an SWIRM domain in the interval 356 to 443 (NSGRRSAPPL…LIREGYITKA (88 aa)). Residues 426-435 (KTRKIYDFLI) mediate DNA binding.

In terms of assembly, interacts with GCN5 and NR3C1. Associated with the P/CAF protein in the PCAF complex. Component of the PCAF complex, at least composed of TADA2L/ADA2, TADA3L/ADA3, TAF5L/PAF65-beta, TAF6L/PAF65-alpha, TAF10/TAFII30, TAF12/TAFII20, TAF9/TAFII31 and TRRAP. Component of the ADA2A-containing complex (ATAC), composed of KAT14, KAT2A, TADA2L, TADA3L, ZZ3, MBIP, WDR5, YEATS2, CCDC101 and DR1. Interacts with CCDC134.

The protein localises to the nucleus. It is found in the chromosome. Component of the ATAC complex, a complex with histone acetyltransferase activity on histones H3 and H4. Required for the function of some acidic activation domains, which activate transcription from a distant site. Binds double-stranded DNA. Binds dinucleosomes, probably at the linker region between neighboring nucleosomes. Plays a role in chromatin remodeling. May promote TP53/p53 'Lys-321' acetylation, leading to reduced TP53 stability and transcriptional activity. May also promote XRCC6 acetylation thus facilitating cell apoptosis in response to DNA damage. The sequence is that of Transcriptional adapter 2-alpha (Tada2a) from Rattus norvegicus (Rat).